The primary structure comprises 454 residues: Metacaspase-1A (454 aa).

Positions Met-1–His-16 are enriched in gly residues. The interval Met-1–His-129 is disordered. Low complexity-rich tracts occupy residues Tyr-38–Asn-47, Tyr-59–Gln-80, Gly-88–Arg-101, and Gly-109–Gly-120. Catalysis depends on residues His-244 and Cys-300.

The protein belongs to the peptidase C14B family.

Functionally, involved in cell death (apoptosis). This Neurospora crassa (strain ATCC 24698 / 74-OR23-1A / CBS 708.71 / DSM 1257 / FGSC 987) protein is Metacaspase-1A (casA).